Reading from the N-terminus, the 100-residue chain is Aspartyl/glutamyl-tRNA(Asn/Gln) amidotransferase subunit C (100 aa).

Belongs to the GatC family. In terms of assembly, heterotrimer of A, B and C subunits.

The enzyme catalyses L-glutamyl-tRNA(Gln) + L-glutamine + ATP + H2O = L-glutaminyl-tRNA(Gln) + L-glutamate + ADP + phosphate + H(+). It carries out the reaction L-aspartyl-tRNA(Asn) + L-glutamine + ATP + H2O = L-asparaginyl-tRNA(Asn) + L-glutamate + ADP + phosphate + 2 H(+). Allows the formation of correctly charged Asn-tRNA(Asn) or Gln-tRNA(Gln) through the transamidation of misacylated Asp-tRNA(Asn) or Glu-tRNA(Gln) in organisms which lack either or both of asparaginyl-tRNA or glutaminyl-tRNA synthetases. The reaction takes place in the presence of glutamine and ATP through an activated phospho-Asp-tRNA(Asn) or phospho-Glu-tRNA(Gln). The protein is Aspartyl/glutamyl-tRNA(Asn/Gln) amidotransferase subunit C of Rickettsia bellii (strain OSU 85-389).